A 474-amino-acid chain; its full sequence is Gamma-aminobutyric acid receptor subunit beta-1 (474 aa).

The N-terminal stretch at 1–25 is a signal peptide; the sequence is MWTVQNRESLGLLSFPVMITMVCCA. At 26–245 the chain is on the extracellular side; it reads HSTNEPSNMS…SFRLKRNIGY (220 aa). A glycan (N-linked (GlcNAc...) asparagine) is linked at N105. Y122 contacts histamine. An intrachain disulfide couples C161 to C175. An N-linked (GlcNAc...) asparagine glycan is attached at N174. Residues 181–182 and T227 each bind histamine; that span reads SY. 4-aminobutanoate-binding residues include Y182 and T227. 3 consecutive transmembrane segments (helical) span residues 246–267, 271–293, and 305–327; these read FILQTYMPSTLITILSWVSFWI, ASAARVALGITTVLTMTTISTHL, and AIDIYLMGCFVFVFLALLEYAFV. Over 328-451 the chain is Cytoplasmic; the sequence is NYIFFGKGPQ…DLTDVNSIDK (124 aa). The helical transmembrane segment at 452–473 threads the bilayer; it reads WSRMFFPITFSLFNVVYWLYYV.

Belongs to the ligand-gated ion channel (TC 1.A.9) family. Gamma-aminobutyric acid receptor (TC 1.A.9.5) subfamily. GABRB1 sub-subfamily. As to quaternary structure, heteropentamer, formed by a combination of alpha (GABRA1-6), beta (GABRB1-3), gamma (GABRG1-3), delta (GABRD), epsilon (GABRE), rho (GABRR1-3), pi (GABRP) and theta (GABRQ) chains, each subunit exhibiting distinct physiological and pharmacological properties. Binds UBQLN1.

The protein localises to the postsynaptic cell membrane. Its subcellular location is the cell membrane. It carries out the reaction chloride(in) = chloride(out). Its activity is regulated as follows. Potentiated by etomidate, propofol, pregnanolone and flurazepam. Potentiated by histamine. Beta subunit of the heteropentameric ligand-gated chloride channel gated by gamma-aminobutyric acid (GABA), a major inhibitory neurotransmitter in the brain. GABA-gated chloride channels, also named GABA(A) receptors (GABAAR), consist of five subunits arranged around a central pore and contain one or two GABA active binding sites located at the alpha and beta subunit interfaces, depending on subunit composition. When activated by GABA, GABAARs selectively allow the flow of chloride anions across the cell membrane down their electrochemical gradient. Chloride influx into the postsynaptic neuron following GABAAR opening decreases the neuron ability to generate a new action potential, thereby reducing nerve transmission. Beta-containing GABAARs can simultaneously bind GABA and histamine where histamine binds at the interface of two neighboring beta subunits, which may be involved in the regulation of sleep and wakefulness. In Homo sapiens (Human), this protein is Gamma-aminobutyric acid receptor subunit beta-1.